The sequence spans 408 residues: Energy-coupling factor transporter ATP-binding protein EcfA1 (408 aa).

The ABC transporter domain maps to 140–374 (IEIKNLSFKY…KEFLRNIQLD (235 aa)). 174-181 (GHNGSGKS) serves as a coordination point for ATP.

It belongs to the ABC transporter superfamily. Energy-coupling factor EcfA family. In terms of assembly, forms a stable energy-coupling factor (ECF) transporter complex composed of 2 membrane-embedded substrate-binding proteins (S component), 2 ATP-binding proteins (A component) and 2 transmembrane proteins (T component).

It is found in the cell membrane. ATP-binding (A) component of a common energy-coupling factor (ECF) ABC-transporter complex. Unlike classic ABC transporters this ECF transporter provides the energy necessary to transport a number of different substrates. In Mycoplasma capricolum subsp. capricolum (strain California kid / ATCC 27343 / NCTC 10154), this protein is Energy-coupling factor transporter ATP-binding protein EcfA1.